The primary structure comprises 166 residues: Mitochondrial fission process protein 1 (166 aa).

A run of 2 helical transmembrane segments spans residues 34–54 (SLVP…YVLA) and 78–98 (ALAV…IPGF). Residue lysine 123 is modified to N6-succinyllysine. Residues 129-149 (LGLLAIPVIIHPIDRSVDFLL) form a helical membrane-spanning segment.

The protein belongs to the MTFP1 family.

Its subcellular location is the mitochondrion inner membrane. In terms of biological role, involved in the mitochondrial division probably by regulating membrane fission. Loss-of-function leads to apoptosis. The polypeptide is Mitochondrial fission process protein 1 (Mtfp1) (Mus musculus (Mouse)).